We begin with the raw amino-acid sequence, 215 residues long: 7-cyano-7-deazaguanine synthase (215 aa).

Residue 8–18 (LSAGLDSTVSL) participates in ATP binding. Zn(2+) contacts are provided by cysteine 191, cysteine 199, cysteine 202, and cysteine 205.

It belongs to the QueC family. In terms of assembly, homodimer. Zn(2+) serves as cofactor.

It catalyses the reaction 7-carboxy-7-deazaguanine + NH4(+) + ATP = 7-cyano-7-deazaguanine + ADP + phosphate + H2O + H(+). It participates in purine metabolism; 7-cyano-7-deazaguanine biosynthesis. Catalyzes the ATP-dependent conversion of 7-carboxy-7-deazaguanine (CDG) to 7-cyano-7-deazaguanine (preQ(0)). The chain is 7-cyano-7-deazaguanine synthase from Carboxydothermus hydrogenoformans (strain ATCC BAA-161 / DSM 6008 / Z-2901).